Reading from the N-terminus, the 231-residue chain is Sensory transduction protein BceR (231 aa).

One can recognise a Response regulatory domain in the interval 3–116; that stretch reads KIMLIEDDHT…VLVAKIQAIL (114 aa). The residue at position 52 (D52) is a 4-aspartylphosphate. The ompR/PhoB-type DNA-binding region spans 127–225; the sequence is TQLKTWCGAT…KVGQGYMAKE (99 aa).

In terms of processing, phosphorylated by BceS.

It localises to the cytoplasm. In terms of biological role, member of the two-component regulatory system BceS/BceR involved in the regulation of bacitracin resistance. When activated by BceS, binds to the upstream region of the bceAB promoter and up-regulates the expression of these two genes. This Halalkalibacterium halodurans (strain ATCC BAA-125 / DSM 18197 / FERM 7344 / JCM 9153 / C-125) (Bacillus halodurans) protein is Sensory transduction protein BceR (bceR).